We begin with the raw amino-acid sequence, 150 residues long: Large ribosomal subunit protein uL15 (150 aa).

Belongs to the universal ribosomal protein uL15 family. In terms of assembly, part of the 50S ribosomal subunit.

In terms of biological role, binds to the 23S rRNA. The protein is Large ribosomal subunit protein uL15 of Anaplasma marginale (strain Florida).